A 263-amino-acid chain; its full sequence is Pyridoxine 5'-phosphate synthase (263 aa).

Residue N15 participates in 3-amino-2-oxopropyl phosphate binding. A 1-deoxy-D-xylulose 5-phosphate-binding site is contributed by 17 to 18 (DH). R26 lines the 3-amino-2-oxopropyl phosphate pocket. H51 acts as the Proton acceptor in catalysis. The 1-deoxy-D-xylulose 5-phosphate site is built by R53 and H58. Residue E78 is the Proton acceptor of the active site. T108 is a 1-deoxy-D-xylulose 5-phosphate binding site. The active-site Proton donor is H199. 3-amino-2-oxopropyl phosphate-binding positions include G200 and 221–222 (GH).

It belongs to the PNP synthase family. As to quaternary structure, homooctamer; tetramer of dimers.

It is found in the cytoplasm. The catalysed reaction is 3-amino-2-oxopropyl phosphate + 1-deoxy-D-xylulose 5-phosphate = pyridoxine 5'-phosphate + phosphate + 2 H2O + H(+). The protein operates within cofactor biosynthesis; pyridoxine 5'-phosphate biosynthesis; pyridoxine 5'-phosphate from D-erythrose 4-phosphate: step 5/5. Functionally, catalyzes the complicated ring closure reaction between the two acyclic compounds 1-deoxy-D-xylulose-5-phosphate (DXP) and 3-amino-2-oxopropyl phosphate (1-amino-acetone-3-phosphate or AAP) to form pyridoxine 5'-phosphate (PNP) and inorganic phosphate. The sequence is that of Pyridoxine 5'-phosphate synthase from Ralstonia nicotianae (strain ATCC BAA-1114 / GMI1000) (Ralstonia solanacearum).